A 255-amino-acid chain; its full sequence is Aliphatic sulfonates import ATP-binding protein SsuB (255 aa).

Residues 5–231 (IRVNEKAFGK…PRSRTSPVFQ (227 aa)) enclose the ABC transporter domain. Position 39–46 (39–46 (GPSGCGKS)) interacts with ATP.

Belongs to the ABC transporter superfamily. Aliphatic sulfonates importer (TC 3.A.1.17.2) family. The complex is composed of two ATP-binding proteins (SsuB), two transmembrane proteins (SsuC) and a solute-binding protein (SsuA).

It localises to the cell membrane. It carries out the reaction ATP + H2O + aliphatic sulfonate-[sulfonate-binding protein]Side 1 = ADP + phosphate + aliphatic sulfonateSide 2 + [sulfonate-binding protein]Side 1.. Its function is as follows. Part of the ABC transporter complex SsuABC involved in aliphatic sulfonates import. Responsible for energy coupling to the transport system. The protein is Aliphatic sulfonates import ATP-binding protein SsuB of Bacillus licheniformis (strain ATCC 14580 / DSM 13 / JCM 2505 / CCUG 7422 / NBRC 12200 / NCIMB 9375 / NCTC 10341 / NRRL NRS-1264 / Gibson 46).